The chain runs to 296 residues: Cyclin-dependent kinase 1 (296 aa).

The region spanning 5–288 (FQKLEKIGEG…AKNGLSHKYF (284 aa)) is the Protein kinase domain. Residues 11–19 (IGEGTYGVV) and lysine 34 contribute to the ATP site. Aspartate 130 acts as the Proton acceptor in catalysis.

Belongs to the protein kinase superfamily. CMGC Ser/Thr protein kinase family. CDC2/CDKX subfamily.

The protein resides in the nucleus. The catalysed reaction is L-seryl-[protein] + ATP = O-phospho-L-seryl-[protein] + ADP + H(+). It catalyses the reaction L-threonyl-[protein] + ATP = O-phospho-L-threonyl-[protein] + ADP + H(+). Its function is as follows. Cyclin-dependent kinase that acts as a master regulator of the mitotic and meiotic cell cycles. This is Cyclin-dependent kinase 1 from Encephalitozoon cuniculi (strain GB-M1) (Microsporidian parasite).